The following is a 211-amino-acid chain: Riboflavin kinase (211 aa).

The interval 1-81 (MKCIDRRLIG…DLLRYFNILS (81 aa)) is H-T-H motif-like. The tract at residues 82-211 (IRLSGRVVSG…DRVEIEIYLE (130 aa)) is riboflavin kinase. Position 91-96 (91-96 (GLGEGA)) interacts with CDP. Residues threonine 120 and asparagine 122 each contribute to the Mg(2+) site. Residues threonine 177 and glutamate 185 each coordinate FMN. 190 to 193 (FKLR) contacts CDP.

This sequence belongs to the archaeal riboflavin kinase family. It depends on Mg(2+) as a cofactor.

The catalysed reaction is riboflavin + CTP = CDP + FMN + H(+). It functions in the pathway cofactor biosynthesis; FMN biosynthesis; FMN from riboflavin (CTP route): step 1/1. In terms of biological role, catalyzes the CTP-dependent phosphorylation of riboflavin (vitamin B2) to form flavin mononucleotide (FMN). This is Riboflavin kinase (ribK) from Pyrobaculum islandicum (strain DSM 4184 / JCM 9189 / GEO3).